Reading from the N-terminus, the 221-residue chain is Putative N-acetylmannosamine-6-phosphate 2-epimerase (221 aa).

This sequence belongs to the NanE family.

It carries out the reaction an N-acyl-D-glucosamine 6-phosphate = an N-acyl-D-mannosamine 6-phosphate. The protein operates within amino-sugar metabolism; N-acetylneuraminate degradation; D-fructose 6-phosphate from N-acetylneuraminate: step 3/5. In terms of biological role, converts N-acetylmannosamine-6-phosphate (ManNAc-6-P) to N-acetylglucosamine-6-phosphate (GlcNAc-6-P). The sequence is that of Putative N-acetylmannosamine-6-phosphate 2-epimerase from Clostridium perfringens (strain ATCC 13124 / DSM 756 / JCM 1290 / NCIMB 6125 / NCTC 8237 / Type A).